The primary structure comprises 391 residues: Multidrug resistance protein MdtL (391 aa).

A run of 12 helical transmembrane segments spans residues 4–24 (FLIC…MYLV), 42–62 (IAFS…GKVA), 69–89 (PVAI…SLAE), 93–113 (LFLA…VVAF), 131–151 (LLNG…HLIM), 158–178 (SLFW…LFIL), 203–222 (FFLS…LTFV), 245–265 (ALTA…LGIF), 269–289 (TLMI…AVSP), 293–313 (VSLF…GVAM), 331–351 (LGIA…VVGI), and 356–376 (MLIG…MFVA).

Belongs to the major facilitator superfamily. DHA1 family. MdtL (TC 2.A.1.2.22) subfamily.

It localises to the cell inner membrane. Functionally, confers resistance to chloramphenicol. In Escherichia coli O17:K52:H18 (strain UMN026 / ExPEC), this protein is Multidrug resistance protein MdtL.